An 881-amino-acid chain; its full sequence is Low-affinity phosphate transporter PHO90 (881 aa).

The 288-residue stretch at 1–288 folds into the SPX domain; the sequence is MRFSHFLKYN…HLNTRTELIE (288 aa). Helical transmembrane passes span 417–437, 456–476, 493–513, 514–534, 539–559, 581–601, 663–683, 691–711, 718–738, 758–778, 805–825, and 854–874; these read IYFI…NDAA, AIPL…FKVL, ILAA…TLGE, VLAQ…FAGC, VLLM…NVAA, AQAL…SSPI, FTVK…LWCV, FGSS…TGLL, AFPW…KAVS, GVFA…TFVS, ILVF…SSGF, and ASIL…ASVV.

It belongs to the CitM (TC 2.A.11) transporter family.

It localises to the membrane. Low-affinity phosphate transporter involved in the control of cellular phosphate levels. In Saccharomyces cerevisiae (strain ATCC 204508 / S288c) (Baker's yeast), this protein is Low-affinity phosphate transporter PHO90 (PHO90).